The chain runs to 1073 residues: ATP-dependent helicase/deoxyribonuclease subunit B (1073 aa).

The protein belongs to the helicase family. AddB/RexB type 2 subfamily. Heterodimer of AddA and RexB. Mg(2+) serves as cofactor.

Functionally, the heterodimer acts as both an ATP-dependent DNA helicase and an ATP-dependent, dual-direction single-stranded exonuclease. Recognizes the chi site generating a DNA molecule suitable for the initiation of homologous recombination. This subunit has 5' -&gt; 3' nuclease activity but not helicase activity. The protein is ATP-dependent helicase/deoxyribonuclease subunit B of Streptococcus equi subsp. zooepidemicus (strain H70).